Consider the following 253-residue polypeptide: Ipsdienol dehydrogenase (253 aa).

NAD(+) is bound by residues valine 12–asparagine 40 and aspartate 63. A substrate-binding site is contributed by serine 149. Residue tyrosine 162 is the Proton acceptor of the active site. Lysine 166 contributes to the NAD(+) binding site.

This sequence belongs to the short-chain dehydrogenases/reductases (SDR) family. In terms of tissue distribution, specifically expressed in male midguts. Expressed at higher level in the anterior midgut of fed males.

The protein resides in the cytoplasm. Its subcellular location is the cytosol. It catalyses the reaction (4R)-ipsdienol + NADP(+) = ipsdienone + NADPH + H(+). The catalysed reaction is (4R)-ipsdienol + NAD(+) = ipsdienone + NADH + H(+). Catalyzes the oxidation of racemic ipsdienol and (4R)-(-)-ipsdienol to form ipsdienone (2-methyl-6-methylene-2,7-octadien-4-one), an intermediate in the biosynthesis of pheromonal ipsdienol in male pine engraver beetles. In contrast, (4S)-(+)-ipsdienol is not a substrate. This is Ipsdienol dehydrogenase from Ips pini (Pine engraver beetle).